The following is a 268-amino-acid chain: Leucyl/phenylalanyl-tRNA--protein transferase (268 aa).

The protein belongs to the L/F-transferase family.

The protein resides in the cytoplasm. The catalysed reaction is N-terminal L-lysyl-[protein] + L-leucyl-tRNA(Leu) = N-terminal L-leucyl-L-lysyl-[protein] + tRNA(Leu) + H(+). The enzyme catalyses N-terminal L-arginyl-[protein] + L-leucyl-tRNA(Leu) = N-terminal L-leucyl-L-arginyl-[protein] + tRNA(Leu) + H(+). It catalyses the reaction L-phenylalanyl-tRNA(Phe) + an N-terminal L-alpha-aminoacyl-[protein] = an N-terminal L-phenylalanyl-L-alpha-aminoacyl-[protein] + tRNA(Phe). Its function is as follows. Functions in the N-end rule pathway of protein degradation where it conjugates Leu, Phe and, less efficiently, Met from aminoacyl-tRNAs to the N-termini of proteins containing an N-terminal arginine or lysine. The sequence is that of Leucyl/phenylalanyl-tRNA--protein transferase from Psychrobacter arcticus (strain DSM 17307 / VKM B-2377 / 273-4).